We begin with the raw amino-acid sequence, 436 residues long: ATP-dependent RNA helicase RhlB (436 aa).

The short motif at 9-37 (QKFADFPLHKEVHQALNEAGFEFCTPIQA) is the Q motif element. In terms of domain architecture, Helicase ATP-binding spans 40-219 (LPILLEKKDI…YDHMNEPEKV (180 aa)). Position 53 to 60 (53 to 60 (AQTGTGKT)) interacts with ATP. Residues 165–168 (DEAD) carry the DEAD box motif. The Helicase C-terminal domain maps to 243-390 (KMPLLLSLLE…VTSYDSDALL (148 aa)). The segment at 392–436 (DIPPPVRIHRKPSTHTRNTRDRSSGRPQGGQRNGPRRHDKTRRHS) is disordered. A compositionally biased stretch (basic residues) spans 425–436 (GPRRHDKTRRHS).

It belongs to the DEAD box helicase family. RhlB subfamily. Component of the RNA degradosome, which is a multiprotein complex involved in RNA processing and mRNA degradation.

The protein localises to the cytoplasm. The catalysed reaction is ATP + H2O = ADP + phosphate + H(+). Its function is as follows. DEAD-box RNA helicase involved in RNA degradation. Has RNA-dependent ATPase activity and unwinds double-stranded RNA. The protein is ATP-dependent RNA helicase RhlB of Shewanella pealeana (strain ATCC 700345 / ANG-SQ1).